A 444-amino-acid chain; its full sequence is MSKTNQNLTIDKVIDNNNNIYLLKLLMIGGDVCSKNGISMVEKFLKHDKNLIQVFDDYDSTDEYINFKMKLNEFSSIDTSNSINNGIIYSENNKNKNNNNNYNYNNNNYNNNNNNNNNNNNNNNNNNNNNNNNNNSNFKIQIQIKDLSDCYCDLKIQTIPSCFYRGIHGFIIVYDINDHIAYNNIPKWIEEINSFSMKNSKIIVVCNDSNSKTPNFSDSSSSSSSSSSSNIIPLNKNTKNKVVGGVGVDPILANKLFQSLSIPHFIVSVDTNENIKMAFNSLKTLIFENNPLFQFFKLQGDDNNNNNNNNNNNNNNNNNNNNNNNNNNNNLNYLNNLNNLNNLNNENNINNNSLNNNNNNNNNNNNNNNNNNNNNNNNNNNNNNNNNNNNNNNNNTYNNDLKTNKKSLEIKKHNSNIEKKEVKQNIKDKKNKNKNKNACTCNLM.

29–36 (GGDVCSKN) serves as a coordination point for GTP. The Effector region signature appears at 51 to 58 (LIQVFDDY). 73-77 (EFSSI) lines the GTP pocket. The disordered stretch occupies residues 91-136 (ENNKNKNNNNNYNYNNNNYNNNNNNNNNNNNNNNNNNNNNNNNNNS). Low complexity predominate over residues 95-135 (NKNNNNNYNYNNNNYNNNNNNNNNNNNNNNNNNNNNNNNNN). Position 207 to 210 (207 to 210 (NDSN)) interacts with GTP. Disordered stretches follow at residues 213 to 232 (TPNF…SNII) and 298 to 401 (LQGD…NNDL). Low complexity-rich tracts occupy residues 217 to 232 (SDSS…SNII) and 303 to 399 (NNNN…TYNN). The S-palmitoyl cysteine moiety is linked to residue Cys-439. The residue at position 441 (Cys-441) is a Cysteine methyl ester. The S-geranylgeranyl cysteine moiety is linked to residue Cys-441. A propeptide spans 442 to 444 (NLM) (removed in mature form).

It belongs to the small GTPase superfamily. Rab family.

It localises to the cell membrane. The protein is Ras-related protein RabX (rabX) of Dictyostelium discoideum (Social amoeba).